Here is a 229-residue protein sequence, read N- to C-terminus: Secretory carrier-associated membrane protein 4 (229 aa).

At 1-39 (MSEKENNFPPLPKFIPVKPCFYQNFSDEIPVEHQVLVKR) the chain is on the cytoplasmic side. The next 4 membrane-spanning stretches (helical) occupy residues 40–60 (IYRLWMFYCATLGVNLIACLA), 61–81 (WWIGGGSGTNFGLAFVWLLLF), 105–125 (FMAFFFIFGAQFVLTVIQAIG), and 149–169 (VVMLLPAIMFSVSAAMMAIAI). Topologically, residues 170-229 (MKVHRIYRGAGGSFQKAQTEWNTGTWRNPPSREAQYNNFSGNSLPEYPTVPSYPGSGQWP) are cytoplasmic. Threonine 194 carries the phosphothreonine modification. The segment at 208–229 (FSGNSLPEYPTVPSYPGSGQWP) is disordered.

This sequence belongs to the SCAMP family.

The protein localises to the membrane. In terms of biological role, probably involved in membrane protein trafficking. The sequence is that of Secretory carrier-associated membrane protein 4 (SCAMP4) from Pongo abelii (Sumatran orangutan).